A 53-amino-acid polypeptide reads, in one-letter code: Large ribosomal subunit protein bL32c (53 aa).

The protein belongs to the bacterial ribosomal protein bL32 family.

The protein localises to the plastid. The protein resides in the chloroplast. This Guillardia theta (Cryptophyte) protein is Large ribosomal subunit protein bL32c (rpl32).